A 128-amino-acid polypeptide reads, in one-letter code: DNA-directed RNA polymerase subunit omega (128 aa).

Positions 87 to 106 (ARSSQAAPKSAPGQEIGKSF) are disordered.

It belongs to the RNA polymerase subunit omega family. As to quaternary structure, the RNAP catalytic core consists of 2 alpha, 1 beta, 1 beta' and 1 omega subunit. When a sigma factor is associated with the core the holoenzyme is formed, which can initiate transcription.

It catalyses the reaction RNA(n) + a ribonucleoside 5'-triphosphate = RNA(n+1) + diphosphate. In terms of biological role, promotes RNA polymerase assembly. Latches the N- and C-terminal regions of the beta' subunit thereby facilitating its interaction with the beta and alpha subunits. The polypeptide is DNA-directed RNA polymerase subunit omega (Anaplasma marginale (strain St. Maries)).